A 181-amino-acid chain; its full sequence is Adenine phosphoribosyltransferase (181 aa).

It belongs to the purine/pyrimidine phosphoribosyltransferase family. Homodimer.

Its subcellular location is the cytoplasm. It catalyses the reaction AMP + diphosphate = 5-phospho-alpha-D-ribose 1-diphosphate + adenine. Its pathway is purine metabolism; AMP biosynthesis via salvage pathway; AMP from adenine: step 1/1. Functionally, catalyzes a salvage reaction resulting in the formation of AMP, that is energically less costly than de novo synthesis. The sequence is that of Adenine phosphoribosyltransferase from Aliivibrio salmonicida (strain LFI1238) (Vibrio salmonicida (strain LFI1238)).